Reading from the N-terminus, the 590-residue chain is Bacillolysin (590 aa).

The signal sequence occupies residues 1–24 (MKKVWFSLLGGAMLLGSVASGASA). Positions 25–286 (ESSVSGPAQL…GSIVFQYDII (262 aa)) are cleaved as a propeptide — activation peptide. Ca(2+) contacts are provided by Asp-339, Asp-341, and Asp-419. His-423 is a Zn(2+) binding site. Glu-424 is a catalytic residue. Zn(2+) is bound by residues His-427 and Glu-447. 5 residues coordinate Ca(2+): Asp-466, Tyr-469, Thr-470, Ile-473, and Asp-476. Residue His-507 is the Proton donor of the active site.

The protein belongs to the peptidase M4 family. It depends on Ca(2+) as a cofactor. The cofactor is Zn(2+).

The protein resides in the secreted. It carries out the reaction Similar, but not identical, to that of thermolysin.. Its function is as follows. Involved in the generation of beta- and alpha-amylases from the large amylase precursor. In Paenibacillus polymyxa (Bacillus polymyxa), this protein is Bacillolysin (npr).